We begin with the raw amino-acid sequence, 102 residues long: NADH-quinone oxidoreductase subunit K (102 aa).

Helical transmembrane passes span L6–V26, I30–V50, and V62–L82.

This sequence belongs to the complex I subunit 4L family. In terms of assembly, NDH-1 is composed of 13 different subunits. Subunits NuoA, H, J, K, L, M, N constitute the membrane sector of the complex.

The protein localises to the cell inner membrane. The enzyme catalyses a quinone + NADH + 5 H(+)(in) = a quinol + NAD(+) + 4 H(+)(out). Functionally, NDH-1 shuttles electrons from NADH, via FMN and iron-sulfur (Fe-S) centers, to quinones in the respiratory chain. The immediate electron acceptor for the enzyme in this species is believed to be ubiquinone. Couples the redox reaction to proton translocation (for every two electrons transferred, four hydrogen ions are translocated across the cytoplasmic membrane), and thus conserves the redox energy in a proton gradient. This Pseudomonas putida (strain W619) protein is NADH-quinone oxidoreductase subunit K.